A 295-amino-acid chain; its full sequence is Protein FAM221A (295 aa).

The disordered stretch occupies residues 244-295 (SEPPGIDKQVSSMRLSEEDDMAYFERRYQERLRKEKEHKRQKNSKPPTTQRP). Positions 266 to 278 (YFERRYQERLRKE) are enriched in basic and acidic residues.

Belongs to the FAM221 family.

The protein is Protein FAM221A (fam221a) of Xenopus laevis (African clawed frog).